Reading from the N-terminus, the 247-residue chain is AA9 family lytic polysaccharide monooxygenase A (247 aa).

An N-terminal signal peptide occupies residues 1–19; the sequence is MVRLASLAVLGSVIATASA. His20 and His100 together coordinate Cu(2+). Cys60 and Cys185 are joined by a disulfide. O2 is bound at residue His165. Tyr182 provides a ligand contact to Cu(2+). Asn193 is a glycosylation site (N-linked (GlcNAc...) asparagine).

This sequence belongs to the polysaccharide monooxygenase AA9 family. Cu(2+) is required as a cofactor.

Its subcellular location is the secreted. The catalysed reaction is [(1-&gt;4)-beta-D-glucosyl]n+m + reduced acceptor + O2 = 4-dehydro-beta-D-glucosyl-[(1-&gt;4)-beta-D-glucosyl]n-1 + [(1-&gt;4)-beta-D-glucosyl]m + acceptor + H2O.. Lytic polysaccharide monooxygenase (LPMO) that depolymerizes polysaccharides via the oxidation of scissile alpha- or beta-(1-4)-glycosidic bonds, yielding C4 oxidation products. Catalysis by LPMOs requires the reduction of the active-site copper from Cu(II) to Cu(I) by a reducing agent and H(2)O(2) or O(2) as a cosubstrate. Shows C4-oxidative cleavage of amorphous cellulose and soluble cello-oligosaccharides. Also active on xyloglucan, mixed-linkage beta-glucan, and glucomannan. Not active on crystalline forms of cellulose. Has higher affinity for linear substrates compared to branched substrates. Catalyzes a fast and specific peroxygenase reaction that is at least two orders of magnitude faster than the apparent monooxygenase reaction. The sequence is that of AA9 family lytic polysaccharide monooxygenase A from Schizophyllum commune (strain H4-8 / FGSC 9210) (Split gill fungus).